A 380-amino-acid polypeptide reads, in one-letter code: MSCPYAGSGNDHDDAAVPLSTEVGKIYGEYLMLDKLLDAQCMLSKEDKRPVHDEHLFIITHQAYELWFKQIIFEFDSIRDMLDAEVIDETKTLEIVKRLNRVVLILKLLVDQVPILETMTPLDFMDFRKYLAPASGFQSLQFRLIENKLGVLTEQRVRYNQKYSDVFGGDEDALTAIRSSEQEPSLLELVQRWLERTPGLEESGFNFWEKFQQSVDKFLEAQVHSAMEEPVERAKNYRLMDIEKRREVYRSIFDPAVHDALVRRGDRRFSHRALQGAIMITFYRDEPRFSQPHQLLTLLMDIDSLITKWRYNHVIMVQRMIGSQQLGTGGSSGYQYLRSTLSDRYKVFLDLFNLSTFLIPREAIPPLDESIRKKLINKSV.

Substrate is bound by residues 57–61 (FIITH) and arginine 128. Histidine 313 contributes to the heme binding site. Threonine 328 is a binding site for substrate.

It belongs to the tryptophan 2,3-dioxygenase family. As to quaternary structure, homotetramer. Dimer of dimers. Heme serves as cofactor.

It carries out the reaction L-tryptophan + O2 = N-formyl-L-kynurenine. Its pathway is amino-acid degradation; L-tryptophan degradation via kynurenine pathway; L-kynurenine from L-tryptophan: step 1/2. It participates in pigment biosynthesis; ommochrome biosynthesis. Heme-dependent dioxygenase that catalyzes the oxidative cleavage of the L-tryptophan (L-Trp) pyrrole ring and converts L-tryptophan to N-formyl-L-kynurenine. Catalyzes the oxidative cleavage of the indole moiety. In Drosophila ananassae (Fruit fly), this protein is Tryptophan 2,3-dioxygenase.